We begin with the raw amino-acid sequence, 64 residues long: Large ribosomal subunit protein bL35 (64 aa).

It belongs to the bacterial ribosomal protein bL35 family.

The chain is Large ribosomal subunit protein bL35 from Shewanella loihica (strain ATCC BAA-1088 / PV-4).